The following is a 246-amino-acid chain: Carboxy-S-adenosyl-L-methionine synthase (246 aa).

Residues Tyr43, 68 to 70 (GCS), 93 to 94 (DN), 121 to 122 (DI), Asn136, and Arg203 each bind S-adenosyl-L-methionine.

This sequence belongs to the class I-like SAM-binding methyltransferase superfamily. Cx-SAM synthase family. In terms of assembly, homodimer.

The enzyme catalyses prephenate + S-adenosyl-L-methionine = carboxy-S-adenosyl-L-methionine + 3-phenylpyruvate + H2O. Functionally, catalyzes the conversion of S-adenosyl-L-methionine (SAM) to carboxy-S-adenosyl-L-methionine (Cx-SAM). This Vibrio cholerae serotype O1 (strain ATCC 39541 / Classical Ogawa 395 / O395) protein is Carboxy-S-adenosyl-L-methionine synthase.